We begin with the raw amino-acid sequence, 131 residues long: Histone H2B.2 (131 aa).

Over residues 1-20 (MAPPKAEKKPASKAPAEKKP) the composition is skewed to basic and acidic residues. Residues 1 to 39 (MAPPKAEKKPASKAPAEKKPAAKKTASSTDAKKRTKTRK) form a disordered region. N6-acetyllysine; alternate occurs at positions 8 and 9. Glycyl lysine isopeptide (Lys-Gly) (interchain with G-Cter in SUMO); alternate cross-links involve residues Lys8 and Lys9. Ser12 is modified (phosphoserine). Residue Lys13 is modified to N6-acetyllysine. Lys18 bears the N6-acetyllysine; alternate mark. A Glycyl lysine isopeptide (Lys-Gly) (interchain with G-Cter in SUMO); alternate cross-link involves residue Lys18. A Glycyl lysine isopeptide (Lys-Gly) (interchain with G-Cter in SUMO) cross-link involves residue Lys19. A Glycyl lysine isopeptide (Lys-Gly) (interchain with G-Cter in ubiquitin) cross-link involves residue Lys125.

It belongs to the histone H2B family. In terms of assembly, the nucleosome is a histone octamer containing two molecules each of H2A, H2B, H3 and H4 assembled in one H3-H4 heterotetramer and two H2A-H2B heterodimers. The octamer wraps approximately 147 bp of DNA. In terms of processing, monoubiquitinated to form H2BK123ub1. H2BK123ub1 gives a specific tag for epigenetic transcriptional activation and is also prerequisite for H3K4me and H3K79me formation. H2BK123ub1 also modulates the formation of double-strand breaks during meiosis and is a prerequisite for DNA-damage checkpoint activation. Phosphorylated by STE20 to form H2BS10ph during progression through meiotic prophase. May be correlated with chromosome condensation. Post-translationally, acetylated by GCN5 to form H2BK11ac and H2BK16ac. H2BK16ac can also be formed by ESA1. Acetylation of N-terminal lysines and particularly formation of H2BK11acK16ac has a positive effect on transcription. In terms of processing, sumoylation to form H2BK6su or H2BK7su, and probably also H2BK16su or H2BK17su, occurs preferentially near the telomeres and represses gene transcription.

It is found in the nucleus. The protein localises to the chromosome. Core component of nucleosome. Nucleosomes wrap and compact DNA into chromatin, limiting DNA accessibility to the cellular machineries which require DNA as a template. Histones thereby play a central role in transcription regulation, DNA repair, DNA replication and chromosomal stability. DNA accessibility is regulated via a complex set of post-translational modifications of histones, also called histone code, and nucleosome remodeling. This is Histone H2B.2 (HTB2) from Scheffersomyces stipitis (strain ATCC 58785 / CBS 6054 / NBRC 10063 / NRRL Y-11545) (Yeast).